A 220-amino-acid polypeptide reads, in one-letter code: Adenylate kinase (220 aa).

Gly10–Thr15 provides a ligand contact to ATP. Residues Ala30 to Ile59 are NMP. AMP-binding positions include Arg36, Asp57–Ile59, Gly83–Arg86, and Gln90. Residues Gly124–Asp161 form an LID region. Arg125 provides a ligand contact to ATP. Residues Cys128 and Cys131 each contribute to the Zn(2+) site. Val134–Tyr135 serves as a coordination point for ATP. Zn(2+) is bound by residues Cys148 and Cys151. AMP-binding residues include Arg158 and Arg169. Gly197 is an ATP binding site.

Belongs to the adenylate kinase family. Monomer.

Its subcellular location is the cytoplasm. The enzyme catalyses AMP + ATP = 2 ADP. The protein operates within purine metabolism; AMP biosynthesis via salvage pathway; AMP from ADP: step 1/1. Functionally, catalyzes the reversible transfer of the terminal phosphate group between ATP and AMP. Plays an important role in cellular energy homeostasis and in adenine nucleotide metabolism. The sequence is that of Adenylate kinase from Pyrococcus abyssi (strain GE5 / Orsay).